A 182-amino-acid chain; its full sequence is Crossover junction endodeoxyribonuclease RuvC (182 aa).

Residues Asp-7, Glu-67, and Asp-139 contribute to the active site. Positions 7, 67, and 139 each coordinate Mg(2+).

It belongs to the RuvC family. In terms of assembly, homodimer which binds Holliday junction (HJ) DNA. The HJ becomes 2-fold symmetrical on binding to RuvC with unstacked arms; it has a different conformation from HJ DNA in complex with RuvA. In the full resolvosome a probable DNA-RuvA(4)-RuvB(12)-RuvC(2) complex forms which resolves the HJ. The cofactor is Mg(2+).

It localises to the cytoplasm. The catalysed reaction is Endonucleolytic cleavage at a junction such as a reciprocal single-stranded crossover between two homologous DNA duplexes (Holliday junction).. In terms of biological role, the RuvA-RuvB-RuvC complex processes Holliday junction (HJ) DNA during genetic recombination and DNA repair. Endonuclease that resolves HJ intermediates. Cleaves cruciform DNA by making single-stranded nicks across the HJ at symmetrical positions within the homologous arms, yielding a 5'-phosphate and a 3'-hydroxyl group; requires a central core of homology in the junction. The consensus cleavage sequence is 5'-(A/T)TT(C/G)-3'. Cleavage occurs on the 3'-side of the TT dinucleotide at the point of strand exchange. HJ branch migration catalyzed by RuvA-RuvB allows RuvC to scan DNA until it finds its consensus sequence, where it cleaves and resolves the cruciform DNA. This Bordetella parapertussis (strain 12822 / ATCC BAA-587 / NCTC 13253) protein is Crossover junction endodeoxyribonuclease RuvC.